Reading from the N-terminus, the 555-residue chain is Glutamine--tRNA ligase (555 aa).

The 'HIGH' region motif lies at 35–45 (PEPNGYLHIGH). Residues 36-38 (EPN) and 42-48 (HIGHAKS) each bind ATP. Asp68 and Tyr213 together coordinate L-glutamine. ATP contacts are provided by residues Thr232, 262-263 (RL), and 270-272 (MSK). Residues 269–273 (VMSKR) carry the 'KMSKS' region motif.

Belongs to the class-I aminoacyl-tRNA synthetase family. Monomer.

The protein resides in the cytoplasm. It catalyses the reaction tRNA(Gln) + L-glutamine + ATP = L-glutaminyl-tRNA(Gln) + AMP + diphosphate. This chain is Glutamine--tRNA ligase, found in Photobacterium profundum (strain SS9).